Here is a 143-residue protein sequence, read N- to C-terminus: MAKKITAYIKLQVKAAQANPSPPVGPALGQHGVNIMEFCKAFNARTQGLEAGLPTPVIITVYSDRSFTFETKSTPASVLLKKAAGLTSGSARPNTVKVGTVTRAQLEEIAKTKNADLTAADMDAAVRTIAGSARSMGLNVEGV.

It belongs to the universal ribosomal protein uL11 family. Part of the ribosomal stalk of the 50S ribosomal subunit. Interacts with L10 and the large rRNA to form the base of the stalk. L10 forms an elongated spine to which L12 dimers bind in a sequential fashion forming a multimeric L10(L12)X complex. Post-translationally, one or more lysine residues are methylated.

In terms of biological role, forms part of the ribosomal stalk which helps the ribosome interact with GTP-bound translation factors. The protein is Large ribosomal subunit protein uL11 of Pseudomonas fluorescens (strain Pf0-1).